We begin with the raw amino-acid sequence, 311 residues long: Ribosomal protein L11 methyltransferase (311 aa).

Positions 160, 181, 203, and 246 each coordinate S-adenosyl-L-methionine.

The protein belongs to the methyltransferase superfamily. PrmA family.

It is found in the cytoplasm. It catalyses the reaction L-lysyl-[protein] + 3 S-adenosyl-L-methionine = N(6),N(6),N(6)-trimethyl-L-lysyl-[protein] + 3 S-adenosyl-L-homocysteine + 3 H(+). Its function is as follows. Methylates ribosomal protein L11. The polypeptide is Ribosomal protein L11 methyltransferase (Macrococcus caseolyticus (strain JCSC5402) (Macrococcoides caseolyticum)).